Reading from the N-terminus, the 430-residue chain is GTPase Obg (430 aa).

In terms of domain architecture, Obg spans 1-158 (MFVDQVKISL…LDVSLELKLL (158 aa)). The interval 118–145 (KGGRGGRGNSRFATPRNPAPDFSEKGEP) is disordered. One can recognise an OBG-type G domain in the interval 159–329 (ADVGLVGFPS…LLYAIADKLE (171 aa)). Residues 165–172 (GFPSVGKS), 190–194 (FTTIK), 212–215 (DLPG), 282–285 (NKMD), and 310–312 (STI) contribute to the GTP site. Mg(2+) is bound by residues Ser172 and Thr192. One can recognise an OCT domain in the interval 352-430 (KHTPSQDKFT…ILGGEFEFVE (79 aa)).

It belongs to the TRAFAC class OBG-HflX-like GTPase superfamily. OBG GTPase family. Monomer. Mg(2+) is required as a cofactor.

Its subcellular location is the cytoplasm. In terms of biological role, an essential GTPase which binds GTP, GDP and possibly (p)ppGpp with moderate affinity, with high nucleotide exchange rates and a fairly low GTP hydrolysis rate. Plays a role in control of the cell cycle, stress response, ribosome biogenesis and in those bacteria that undergo differentiation, in morphogenesis control. This is GTPase Obg from Staphylococcus aureus (strain COL).